Here is a 437-residue protein sequence, read N- to C-terminus: Photosystem II stability/assembly factor HCF136, chloroplastic (437 aa).

The protein belongs to the Ycf48 family.

Its subcellular location is the plastid. The protein localises to the chloroplast thylakoid membrane. Functionally, essential for photosystem II (PSII) biogenesis; required for assembly of an early intermediate in PSII assembly that includes D2 (psbD) and cytochrome b559. The chain is Photosystem II stability/assembly factor HCF136, chloroplastic from Cyanidioschyzon merolae (strain NIES-3377 / 10D) (Unicellular red alga).